A 275-amino-acid polypeptide reads, in one-letter code: Multi-heme protein MamP (275 aa).

The Cytoplasmic portion of the chain corresponds to 1–6; it reads MNSKVA. Over 7–20 the chain traverses the membrane; sequence LLVVGLAVVLALVI. Topologically, residues 21–275 are lumenal; it reads GRQGPVAPQA…GPCEACHVIK (255 aa). Positions 89 to 206 are PDZ; that stretch reads KLKVFEGHWQ…GGLGFAQLEG (118 aa). An MCR (magnetochrome) 1 motif is present at residues 210 to 230; it reads ILAGDPRPHGYRGACTDCHPI. 6 residues coordinate heme: Cys224, Cys227, His228, Cys268, Cys271, and His272. Residues 250–274 carry the MCR 2 motif; it reads ITRDMVARSVNPHEVRGPCEACHVI.

This sequence belongs to the magnetosome MamP family. As to quaternary structure, homodimer. It depends on heme as a cofactor. Subject to proteolytic cleavage which requires both MamE and MamO.

It is found in the cell inner membrane. Functionally, involved in redox-control of magnetite formation; oxidizes Fe(2+) to Fe(3+) or to mixed-valent Fe(2+)-Fe(3+) oxide minerals. May control magnetite crystal size and number. Overproduction of MamP leads to more crystals than normal during exponential growth of normal size; in stationary phase crystal numbers become wild-type. The polypeptide is Multi-heme protein MamP (mamP) (Paramagnetospirillum magneticum (strain ATCC 700264 / AMB-1) (Magnetospirillum magneticum)).